Reading from the N-terminus, the 461-residue chain is Bifunctional protein HldE (461 aa).

The segment at 1-312 is ribokinase; sequence MLEFLSQQKP…IRSFKSMSFE (312 aa). 191-194 provides a ligand contact to ATP; that stretch reads NKKE. Asp-259 is a catalytic residue. Positions 334-461 are cytidylyltransferase; sequence FTNGCFDIVH…KIIEKIKDKK (128 aa).

This sequence in the N-terminal section; belongs to the carbohydrate kinase PfkB family. The protein in the C-terminal section; belongs to the cytidylyltransferase family. As to quaternary structure, homodimer.

It catalyses the reaction D-glycero-beta-D-manno-heptose 7-phosphate + ATP = D-glycero-beta-D-manno-heptose 1,7-bisphosphate + ADP + H(+). It carries out the reaction D-glycero-beta-D-manno-heptose 1-phosphate + ATP + H(+) = ADP-D-glycero-beta-D-manno-heptose + diphosphate. It functions in the pathway nucleotide-sugar biosynthesis; ADP-L-glycero-beta-D-manno-heptose biosynthesis; ADP-L-glycero-beta-D-manno-heptose from D-glycero-beta-D-manno-heptose 7-phosphate: step 1/4. The protein operates within nucleotide-sugar biosynthesis; ADP-L-glycero-beta-D-manno-heptose biosynthesis; ADP-L-glycero-beta-D-manno-heptose from D-glycero-beta-D-manno-heptose 7-phosphate: step 3/4. Its function is as follows. Catalyzes the phosphorylation of D-glycero-D-manno-heptose 7-phosphate at the C-1 position to selectively form D-glycero-beta-D-manno-heptose-1,7-bisphosphate. Functionally, catalyzes the ADP transfer from ATP to D-glycero-beta-D-manno-heptose 1-phosphate, yielding ADP-D-glycero-beta-D-manno-heptose. This is Bifunctional protein HldE from Campylobacter jejuni (strain RM1221).